The sequence spans 282 residues: Acetyl-coenzyme A carboxylase carboxyl transferase subunit beta (282 aa).

The CoA carboxyltransferase N-terminal domain occupies 23–282 (IWTKCGQCDA…MLSKLHHQQA (260 aa)). Cys-27, Cys-30, Cys-46, and Cys-49 together coordinate Zn(2+). The segment at 27–49 (CGQCDAVLYKTELEKQLGVCPKC) adopts a C4-type zinc-finger fold.

This sequence belongs to the AccD/PCCB family. In terms of assembly, acetyl-CoA carboxylase is a heterohexamer composed of biotin carboxyl carrier protein (AccB), biotin carboxylase (AccC) and two subunits each of ACCase subunit alpha (AccA) and ACCase subunit beta (AccD). Zn(2+) is required as a cofactor.

It is found in the cytoplasm. It catalyses the reaction N(6)-carboxybiotinyl-L-lysyl-[protein] + acetyl-CoA = N(6)-biotinyl-L-lysyl-[protein] + malonyl-CoA. It participates in lipid metabolism; malonyl-CoA biosynthesis; malonyl-CoA from acetyl-CoA: step 1/1. Component of the acetyl coenzyme A carboxylase (ACC) complex. Biotin carboxylase (BC) catalyzes the carboxylation of biotin on its carrier protein (BCCP) and then the CO(2) group is transferred by the transcarboxylase to acetyl-CoA to form malonyl-CoA. The chain is Acetyl-coenzyme A carboxylase carboxyl transferase subunit beta from Pseudoalteromonas atlantica (strain T6c / ATCC BAA-1087).